Here is a 390-residue protein sequence, read N- to C-terminus: Flagellar P-ring protein (390 aa).

Positions 1 to 36 (MFFSRKIRSLLLTPKRRWSLILTLCLIFTGINFSTS) are cleaved as a signal peptide.

The protein belongs to the FlgI family. As to quaternary structure, the basal body constitutes a major portion of the flagellar organelle and consists of four rings (L,P,S, and M) mounted on a central rod.

It localises to the periplasm. The protein localises to the bacterial flagellum basal body. Functionally, assembles around the rod to form the L-ring and probably protects the motor/basal body from shearing forces during rotation. This is Flagellar P-ring protein from Desulfotalea psychrophila (strain LSv54 / DSM 12343).